The following is a 194-amino-acid chain: MMINTQEDKLVSAHDAEEFHRFFVGHDSDLQQEVTTLLTREAHLLDIQAYNAWLEHCVAPEIKYQVISREFRSTSERRYQLNDAVNIYNENYQHLKVRVEHQMDPQNWANSPKIRFTRFVTNVTAAKDKIVPDLLHVRSNLILHRARRGNQVDVFYATREDKWKRIEGGGIQLVERLVDYPERILQTHNLMTFL.

It belongs to the bacterial ring-hydroxylating dioxygenase beta subunit family. In terms of assembly, the naphthalene dioxygenase (NDO) multicomponent enzyme system is composed of an electron transfer component and a dioxygenase component (iron sulfur protein (ISP)). The electron transfer component is composed of a ferredoxin reductase (NagAa) and a ferredoxin (NagAb), and the dioxygenase component is formed by a large alpha subunit (NagAc) and a small beta subunit (NagAd).

It functions in the pathway aromatic compound metabolism; naphthalene degradation. Functionally, component of the naphthalene dioxygenase (NDO) multicomponent enzyme system which catalyzes the incorporation of both atoms of molecular oxygen into naphthalene to form cis-(1R,2S)-dihydroxy-1,2-dihydronaphthalene. Also able to use styrene as substrate. The beta subunit seems to have a structural role in the holoenzyme. The polypeptide is Naphthalene 1,2-dioxygenase system, small oxygenase component (Ralstonia sp).